The chain runs to 520 residues: GMP synthase [glutamine-hydrolyzing] (520 aa).

In terms of domain architecture, Glutamine amidotransferase type-1 spans 9–202 (TILIIDFGSQ…VHRIVGVKPG (194 aa)). Cys-86 serves as the catalytic Nucleophile. Active-site residues include His-176 and Glu-178. In terms of domain architecture, GMPS ATP-PPase spans 203 to 395 (WTMGAYREQA…LGLPDSFIGR (193 aa)). 230–236 (SGGVDSS) is a binding site for ATP.

Homodimer.

The enzyme catalyses XMP + L-glutamine + ATP + H2O = GMP + L-glutamate + AMP + diphosphate + 2 H(+). Its pathway is purine metabolism; GMP biosynthesis; GMP from XMP (L-Gln route): step 1/1. Its function is as follows. Catalyzes the synthesis of GMP from XMP. This is GMP synthase [glutamine-hydrolyzing] from Brucella melitensis biotype 2 (strain ATCC 23457).